The chain runs to 627 residues: WPP domain-interacting tail-anchored protein 2 (627 aa).

Coiled-coil stretches lie at residues 81–152, 188–218, and 312–542; these read CGIL…RRTL, LEKS…KLHY, and TLRE…KILR. The disordered stretch occupies residues 577 to 597; sequence SLQEDERTREEPEKQSVSEKS. Residues 580 to 597 are compositionally biased toward basic and acidic residues; the sequence is EDERTREEPEKQSVSEKS. The helical transmembrane segment at 606-626 threads the bilayer; that stretch reads LKHILVVALVFVLFCSFFGVT.

Component of Ran complexes at least composed of WIT1 or WIT2, RANGAP1 or RANGAP2, and WIP1 or WIP2 or WIP3. Interacts with KAKU1. Core component of the LINC complex which is composed of inner nuclear membrane SUN domain-containing proteins coupled to outer nuclear membrane WIP and WIT proteins. The LINC complex also involves nucleoskeletal proteins CRWN/LINC and possibly KAKU4 and the cytoskeletal myosin KAKU1. Interacts with WIP1, WIP2 and WIP3. Ubiquitous.

It localises to the membrane. In terms of biological role, together with WIT1, required for the nuclear envelope docking of RANGAP proteins in root tips. Plays a role in nuclear shape determination. As component of the SUN-WIP-WIT2-KAKU1 complex, mediates the transfer of cytoplasmic forces to the nuclear envelope (NE), leading to nuclear shape changes. The sequence is that of WPP domain-interacting tail-anchored protein 2 (WIT2) from Arabidopsis thaliana (Mouse-ear cress).